The sequence spans 270 residues: Probable septum site-determining protein MinC (270 aa).

The disordered stretch occupies residues 105–129; it reads DRRAPSSKAADEAPVQQAEPAAPAA. Residues 116 to 129 are compositionally biased toward low complexity; sequence EAPVQQAEPAAPAA.

This sequence belongs to the MinC family. In terms of assembly, interacts with MinD and FtsZ.

Cell division inhibitor that blocks the formation of polar Z ring septums. Rapidly oscillates between the poles of the cell to destabilize FtsZ filaments that have formed before they mature into polar Z rings. Prevents FtsZ polymerization. This is Probable septum site-determining protein MinC from Burkholderia mallei (strain NCTC 10247).